Reading from the N-terminus, the 369-residue chain is MIALLILSLTCSASTYRLQGFTNAGIVAYKNIQDDNIVFSPFGYSFSMFMSLLPASGNTRIELLKTMDLRKRDLGPAFTELISGLAKLKTSKYTYTDLTYQSFVDNTVCIKPSYYQQYHRFGLYRLNFRRDAVNKINSIVERRSGMSNVVDSNMLDNNTLWAIINTIYFKGIWQYPFDITKTRNASFTNKYGTKTVPMMNVVTKLQGNTITIDDKEYDMVRLPYKDANISMYLAIGDNMTHFTDSITAAKLDYWSFQLGNKVYNLKLPKFSIENKRDIKSIAEMMAPSMFNPDNASFKHMTRDPLYIYKMFQNAKIDVDEQGTVAEASTIMVATARSSPEKLEFNTPFVFIIRHDITGFILFMGKVESP.

Positions 1–15 (MIALLILSLTCSAST) are cleaved as a signal peptide.

The protein belongs to the serpin family. Orthopoxvirus OPG040 subfamily. In terms of assembly, interacts with A56 protein.

The protein localises to the virion membrane. The protein resides in the host cell membrane. Prevents cell to cell fusion via its interaction with A56 protein. The A56-K2 complex associates with components of the entry fusion complex (EFC) presumably to avoid superinfection and syncytium formation. The protein is Superinfection exclusion protein (OPG040) of Vaccinia virus (strain Ankara) (VACV).